A 510-amino-acid polypeptide reads, in one-letter code: Acyl-CoA desaturase 1 (510 aa).

The Cytoplasmic portion of the chain corresponds to 1–112; it reads MPTSGTTIEL…TLNNWHQHLN (112 aa). A helical membrane pass occupies residues 113–133; it reads WLNMVLVCGMPMIGWYFALSG. Residues 134 to 138 lie on the Lumenal side of the membrane; it reads KVPLH. Residues 139–159 form a helical membrane-spanning segment; the sequence is LNVFLFSVFYYAVGGVSITAG. Topologically, residues 160–255 are cytoplasmic; it reads YHRLWSHRSY…DWTIRFQHRH (96 aa). Fe cation is bound by residues His161, His166, His198, His201, and His202. Positions 161–166 match the Histidine box-1 motif; sequence HRLWSH. The Histidine box-2 motif lies at 198–202; it reads HRIHH. Residues 256 to 276 form a helical membrane-spanning segment; sequence YILLMLLTAFVIPTLICGYFF. Over 277–280 the chain is Lumenal; that stretch reads NDYM. A helical transmembrane segment spans residues 281–301; sequence GGLIYAGFIRVFVIQQATFCI. The Cytoplasmic segment spans residues 302-510; sequence NSLAHYIGTQ…GEIYETGKFF (209 aa). His306, His335, His338, and His339 together coordinate Fe cation. The Histidine box-3 signature appears at 335-339; sequence HNFHH. The 79-residue stretch at 409–487 folds into the Cytochrome b5 heme-binding domain; it reads LPMWDKQTFL…LADMRVAVIK (79 aa). The heme site is built by His444 and His470.

This sequence belongs to the fatty acid desaturase type 1 family. Fe(2+) is required as a cofactor.

It is found in the endoplasmic reticulum membrane. The enzyme catalyses octadecanoyl-CoA + 2 Fe(II)-[cytochrome b5] + O2 + 2 H(+) = (9Z)-octadecenoyl-CoA + 2 Fe(III)-[cytochrome b5] + 2 H2O. The catalysed reaction is hexadecanoyl-CoA + 2 Fe(II)-[cytochrome b5] + O2 + 2 H(+) = (9Z)-hexadecenoyl-CoA + 2 Fe(III)-[cytochrome b5] + 2 H2O. Functionally, stearoyl-CoA desaturase that utilizes O(2) and electrons from reduced cytochrome b5 to introduce the first double bond into saturated fatty acyl-CoA substrates. Catalyzes the insertion of a cis double bond at the delta-9 position into fatty acyl-CoA substrates including palmitoyl-CoA and stearoyl-CoA. Required for the biosynthesis of membrane phospholipids, cholesterol esters and triglycerides. Regulates fatty acid desaturation, that is, the ratio of unsaturated versus saturated fatty acyl chains, by competing with the acyltransferase STC1 for the common substrate C16:0-CoA. SCT1 sequesters C16:0-CoA into lipids, thereby shielding it from desaturation by OLE1. This is Acyl-CoA desaturase 1 (OLE1) from Saccharomyces cerevisiae (strain ATCC 204508 / S288c) (Baker's yeast).